The primary structure comprises 412 residues: Putative phosphate permease PF1020 (412 aa).

The next 10 membrane-spanning stretches (helical) occupy residues M7–I27, A50–T70, V88–T108, S119–W139, I143–V163, F187–G207, G213–L233, W298–V318, F335–I355, and D384–F404.

It belongs to the inorganic phosphate transporter (PiT) (TC 2.A.20) family.

It is found in the cell membrane. Its function is as follows. Potential transporter for phosphate. This Pyrococcus furiosus (strain ATCC 43587 / DSM 3638 / JCM 8422 / Vc1) protein is Putative phosphate permease PF1020.